The primary structure comprises 166 residues: Small ribosomal subunit protein uS5 (166 aa).

Positions 11 to 74 (LEDRVVSINR…EDAKKNLINV (64 aa)) constitute an S5 DRBM domain.

This sequence belongs to the universal ribosomal protein uS5 family. In terms of assembly, part of the 30S ribosomal subunit. Contacts proteins S4 and S8.

With S4 and S12 plays an important role in translational accuracy. Functionally, located at the back of the 30S subunit body where it stabilizes the conformation of the head with respect to the body. The chain is Small ribosomal subunit protein uS5 from Latilactobacillus sakei subsp. sakei (strain 23K) (Lactobacillus sakei subsp. sakei).